The following is a 197-amino-acid chain: Fucoxanthin-chlorophyll a-c binding protein C, chloroplastic (197 aa).

The N-terminal 31 residues, Met-1–Met-31, are a transit peptide targeting the chloroplast. The next 3 helical transmembrane spans lie at Ile-73–Ile-94, Ile-113–Met-133, and Gly-174–Pro-196.

Belongs to the fucoxanthin chlorophyll protein family. As to quaternary structure, the LHC complex of chromophytic algae is composed of fucoxanthin, chlorophyll A and C bound non-covalently by fucoxanthin chlorophyll proteins (FCPs). The ratio of the pigments in LHC; fucoxanthin: chlorophyll C: chlorophyll A; (0.6-1): (0.1-0.3): (1).

Its subcellular location is the plastid. The protein resides in the chloroplast thylakoid membrane. The light-harvesting complex (LHC) functions as a light receptor, it captures and delivers excitation energy to photosystems with which it is closely associated. Energy is transferred from the carotenoid and chlorophyll C (or B) to chlorophyll A and the photosynthetic reaction centers where it is used to synthesize ATP and reducing power. The sequence is that of Fucoxanthin-chlorophyll a-c binding protein C, chloroplastic (FCPC) from Phaeodactylum tricornutum (Diatom).